The chain runs to 274 residues: Undecaprenyl-diphosphatase (274 aa).

A run of 8 helical transmembrane segments spans residues 1 to 21 (MDWL…FLPI), 42 to 62 (VKDT…LVYY), 81 to 101 (LWLG…LFGD), 107 to 127 (LFRP…MWLL), 142 to 162 (ISAG…LWPG), 184 to 204 (TKFS…LDFI), 213 to 233 (IGVV…YFAI), and 248 to 268 (FAVY…RGVL).

The protein belongs to the UppP family.

The protein localises to the cell membrane. It carries out the reaction di-trans,octa-cis-undecaprenyl diphosphate + H2O = di-trans,octa-cis-undecaprenyl phosphate + phosphate + H(+). In terms of biological role, catalyzes the dephosphorylation of undecaprenyl diphosphate (UPP). Confers resistance to bacitracin. In Deinococcus radiodurans (strain ATCC 13939 / DSM 20539 / JCM 16871 / CCUG 27074 / LMG 4051 / NBRC 15346 / NCIMB 9279 / VKM B-1422 / R1), this protein is Undecaprenyl-diphosphatase.